Reading from the N-terminus, the 250-residue chain is Exotoxin type A (250 aa).

An N-terminal signal peptide occupies residues 1-30 (MENNKEVLKKMVFFVLMKFLGLTILPKGIC). A disulfide bond links Cys-117 and Cys-128.

It belongs to the staphylococcal/streptococcal toxin family.

Its function is as follows. Causative agent of the symptoms associated with scarlet fever, have been associated with streptococcal toxic shock-like disease and may play a role in the early events of rheumatic fever. The polypeptide is Exotoxin type A (speA) (Streptococcus pyogenes).